A 248-amino-acid polypeptide reads, in one-letter code: Type III pantothenate kinase (248 aa).

Residue 6–13 (DCGNSFIK) participates in ATP binding. Residues tyrosine 92 and 99-102 (GLDR) contribute to the substrate site. Aspartate 101 functions as the Proton acceptor in the catalytic mechanism. Residue aspartate 121 coordinates K(+). Threonine 124 contributes to the ATP binding site. Threonine 180 serves as a coordination point for substrate.

Belongs to the type III pantothenate kinase family. As to quaternary structure, homodimer. Requires NH4(+) as cofactor. K(+) is required as a cofactor.

It is found in the cytoplasm. It carries out the reaction (R)-pantothenate + ATP = (R)-4'-phosphopantothenate + ADP + H(+). It functions in the pathway cofactor biosynthesis; coenzyme A biosynthesis; CoA from (R)-pantothenate: step 1/5. In terms of biological role, catalyzes the phosphorylation of pantothenate (Pan), the first step in CoA biosynthesis. This Ectopseudomonas mendocina (strain ymp) (Pseudomonas mendocina) protein is Type III pantothenate kinase.